A 531-amino-acid polypeptide reads, in one-letter code: HERV-H LTR-associating protein 1 (531 aa).

Positions 1-29 are cleaved as a signal peptide; it reads MLGFLSRGPSMKLCMGLACVLSLWNTVSG. 3 N-linked (GlcNAc...) asparagine glycosylation sites follow: N79, N143, and N161. 2 disordered regions span residues 231-289 and 340-362; these read GTAR…RPPE and EKKPGGSLWETRSSPPTTAGTEE. Polar residues-rich tracts occupy residues 232-269 and 349-362; these read TARTSKPTTKSQKTLPSTSPGHWTQSTPWASALRSSPW and ETRSSPPTTAGTEE.

It localises to the secreted. This Homo sapiens (Human) protein is HERV-H LTR-associating protein 1 (HHLA1).